A 210-amino-acid polypeptide reads, in one-letter code: Acetoin utilization protein AcuA (210 aa).

The N-acetyltransferase domain maps to 20–161; it reads LIEGPVSPED…YRKIMEKMMN (142 aa).

The protein belongs to the acetyltransferase family. In terms of assembly, monomer.

Its pathway is ketone degradation; acetoin degradation. With respect to regulation, activity is sensitive to salt concentration, a high concentration of KCL (500 mM) is needed for complete inactivation. Part of the acuABC operon, which is possibly involved in the breakdown of acetoin and butanediol. Acts as an acetyltransferase inactivating acetyl-CoA synthetase AcsA via acetylation at a Lys residue. This is Acetoin utilization protein AcuA (acuA) from Bacillus subtilis (strain 168).